The sequence spans 272 residues: Phosphonates import ATP-binding protein PhnC 1 (272 aa).

In terms of domain architecture, ABC transporter spans 2-246 (LRIQALTKTY…VLTSIYGEED (245 aa)). An ATP-binding site is contributed by 35 to 42 (GPSGAGKS).

This sequence belongs to the ABC transporter superfamily. Phosphonates importer (TC 3.A.1.9.1) family. The complex is composed of two ATP-binding proteins (PhnC), two transmembrane proteins (PhnE) and a solute-binding protein (PhnD).

The protein localises to the cell inner membrane. It carries out the reaction phosphonate(out) + ATP + H2O = phosphonate(in) + ADP + phosphate + H(+). Part of the ABC transporter complex PhnCDE involved in phosphonates import. Responsible for energy coupling to the transport system. This is Phosphonates import ATP-binding protein PhnC 1 from Rhodopseudomonas palustris (strain BisB18).